Reading from the N-terminus, the 485-residue chain is Mitochondrial metalloendopeptidase OMA1 (485 aa).

Residues 1 to 16 (MKPSLKRRLLLLSRKF) constitute a mitochondrion transit peptide. The Mitochondrial matrix segment spans residues 17–147 (AKASIRKLLR…GPGRWFQNPR (131 aa)). Residues 148–168 (TVFTVVLVGSVGLITLIVGNT) form a helical membrane-spanning segment. Over 169-485 (ETIPYTKRTH…AGRTGVEGFL (317 aa)) the chain is Mitochondrial intermembrane. Position 352 (His352) interacts with Zn(2+). Glu353 is an active-site residue. Positions 356 and 405 each coordinate Zn(2+). The interval 456-485 (KLLAQANVMEEALMIYREVQAGRTGVEGFL) is required for protease activation.

Belongs to the peptidase M48A family. In terms of assembly, homooligomer. Zn(2+) serves as cofactor.

The protein resides in the mitochondrion inner membrane. Functionally, protease that is part of the quality control system in the inner membrane of mitochondria. Metalloendopeptidase that modulates the oxidative phosphorylation (OXPHOS) system and plant growth. Involved in tolerance mechanisms to heat, osmotic and oxidative stresses. The chain is Mitochondrial metalloendopeptidase OMA1 from Arabidopsis thaliana (Mouse-ear cress).